Reading from the N-terminus, the 426-residue chain is Citrate synthase (426 aa).

Residues histidine 314 and aspartate 372 contribute to the active site.

Belongs to the citrate synthase family.

The enzyme catalyses oxaloacetate + acetyl-CoA + H2O = citrate + CoA + H(+). Its pathway is carbohydrate metabolism; tricarboxylic acid cycle; isocitrate from oxaloacetate: step 1/2. This chain is Citrate synthase (gltA), found in Helicobacter pylori (strain J99 / ATCC 700824) (Campylobacter pylori J99).